The sequence spans 453 residues: Chromosomal replication initiator protein DnaA (453 aa).

Positions 1–74 (MKEKQFWNRI…GFEIYDAEIT (74 aa)) are domain I, interacts with DnaA modulators. The domain II stretch occupies residues 74–113 (TPHYIFTKPQDTTSSQVEEATNLTLYDYSPKLVSIPYSDT). The domain III, AAA+ region stretch occupies residues 114–331 (GLKEKYTFDN…GAINDITLIA (218 aa)). Residues Gly-158, Gly-160, Lys-161, and Thr-162 each contribute to the ATP site. The tract at residues 332 to 453 (RVKKIKDITI…EIESIKKKIK (122 aa)) is domain IV, binds dsDNA.

Belongs to the DnaA family. As to quaternary structure, oligomerizes as a right-handed, spiral filament on DNA at oriC.

The protein localises to the cytoplasm. In terms of biological role, plays an essential role in the initiation and regulation of chromosomal replication. ATP-DnaA binds to the origin of replication (oriC) to initiate formation of the DNA replication initiation complex once per cell cycle. Binds the DnaA box (a 9 base pair repeat at the origin) and separates the double-stranded (ds)DNA. Forms a right-handed helical filament on oriC DNA; dsDNA binds to the exterior of the filament while single-stranded (ss)DNA is stabiized in the filament's interior. The ATP-DnaA-oriC complex binds and stabilizes one strand of the AT-rich DNA unwinding element (DUE), permitting loading of DNA polymerase. After initiation quickly degrades to an ADP-DnaA complex that is not apt for DNA replication. Binds acidic phospholipids. The polypeptide is Chromosomal replication initiator protein DnaA (Streptococcus pneumoniae (strain Taiwan19F-14)).